Consider the following 287-residue polypeptide: Probable ABC transporter extracellular-binding protein YckB (287 aa).

Positions 1-24 are cleaved as a signal peptide; that stretch reads MKSFMHSKAVIFSFTMAFFLILAA. A lipid anchor (N-palmitoyl cysteine) is attached at C25. A lipid anchor (S-diacylglycerol cysteine) is attached at C25.

The protein belongs to the bacterial solute-binding protein 3 family.

The protein localises to the cell membrane. In terms of biological role, probably part of a binding-protein-dependent transport system. This chain is Probable ABC transporter extracellular-binding protein YckB (yckB), found in Bacillus subtilis (strain 168).